The primary structure comprises 890 residues: MSANNSPPSAQKSVLPTAIPAVLPAASPCSSPKTGLSARLSNGSFSAPSLTNSRGSVHTVSFLLQIGLTRESVTIEAQELSLSAVKDLVCSIVYQKFPECGFFGMYDKILLFRHDMNSENILQLITSADEIHEGDLVEVVLSALATVEDFQIRPHTLYVHSYKAPTFCDYCGEMLWGLVRQGLKCEGCGLNYHKRCAFKIPNNCSGVRKRRLSNVSLPGPGLSVPRPLQPEYVALPSEESHVHQEPSKRIPSWSGRPIWMEKMVMCRVKVPHTFAVHSYTRPTICQYCKRLLKGLFRQGMQCKDCKFNCHKRCASKVPRDCLGEVTFNGEPSSLGTDTDIPMDIDNNDINSDSSRGLDDTEEPSPPEDKMFFLDPSDLDVERDEEAVKTISPSTSNNIPLMRVVQSIKHTKRKSSTMVKEGWMVHYTSRDNLRKRHYWRLDSKCLTLFQNESGSKYYKEIPLSEILRISSPRDFTNISQGSNPHCFEIITDTMVYFVGENNGDSSHNPVLAATGVGLDVAQSWEKAIRQALMPVTPQASVCTSPGQGKDHKDLSTSISVSNCQIQENVDISTVYQIFADEVLGSGQFGIVYGGKHRKTGRDVAIKVIDKMRFPTKQESQLRNEVAILQNLHHPGIVNLECMFETPERVFVVMEKLHGDMLEMILSSEKSRLPERITKFMVTQILVALRNLHFKNIVHCDLKPENVLLASAEPFPQVKLCDFGFARIIGEKSFRRSVVGTPAYLAPEVLRSKGYNRSLDMWSVGVIIYVSLSGTFPFNEDEDINDQIQNAAFMYPPNPWREISGEAIDLINNLLQVKMRKRYSVDKSLSHPWLQDYQTWLDLREFETRIGERYITHESDDARWEIHAYTHNLVYPKHFIMAPNPDDMEEDP.

5 positions are modified to phosphoserine: Ser-6, Ser-27, Ser-37, Ser-41, and Ser-44. The Phorbol-ester/DAG-type 1 zinc finger occupies 154–204 (PHTLYVHSYKAPTFCDYCGEMLWGLVRQGLKCEGCGLNYHKRCAFKIPNNC). Residues Ser-213 and Ser-216 each carry the phosphoserine modification. The segment at 271 to 321 (PHTFAVHSYTRPTICQYCKRLLKGLFRQGMQCKDCKFNCHKRCASKVPRDC) adopts a Phorbol-ester/DAG-type 2 zinc-finger fold. Positions 332–371 (SSLGTDTDIPMDIDNNDINSDSSRGLDDTEEPSPPEDKMF) are disordered. 3 positions are modified to phosphoserine: Ser-364, Ser-391, and Ser-395. The region spanning 416-532 (TMVKEGWMVH…WEKAIRQALM (117 aa)) is the PH domain. Phosphotyrosine is present on Tyr-426. Phosphoserine is present on Ser-442. At Tyr-457 the chain carries Phosphotyrosine. The residue at position 535 (Thr-535) is a Phosphothreonine. Ser-539 carries the post-translational modification Phosphoserine. The Protein kinase domain maps to 576–832 (IFADEVLGSG…VDKSLSHPWL (257 aa)). Residues 582–590 (LGSGQFGIV) and Lys-605 contribute to the ATP site. Asp-699 serves as the catalytic Proton acceptor. Ser-731 is subject to Phosphoserine; by PKC. At Ser-735 the chain carries Phosphoserine; by autocatalysis. Tyr-742 is subject to Phosphotyrosine.

The protein belongs to the protein kinase superfamily. CAMK Ser/Thr protein kinase family. PKD subfamily. The cofactor is Mg(2+). Ubiquitous.

The protein resides in the cytoplasm. It localises to the membrane. The catalysed reaction is L-seryl-[protein] + ATP = O-phospho-L-seryl-[protein] + ADP + H(+). It catalyses the reaction L-threonyl-[protein] + ATP = O-phospho-L-threonyl-[protein] + ADP + H(+). Its activity is regulated as follows. Activated by DAG and phorbol esters. Phorbol-ester/DAG-type domains 1 and 2 bind both DAG and phorbol ester with high affinity and mediate translocation to the cell membrane. Autophosphorylation of Ser-735 and phosphorylation of Ser-731 by PKC relieves auto-inhibition by the PH domain. Converts transient diacylglycerol (DAG) signals into prolonged physiological effects, downstream of PKC. Involved in resistance to oxidative stress. This chain is Serine/threonine-protein kinase D3 (PRKD3), found in Homo sapiens (Human).